Here is a 334-residue protein sequence, read N- to C-terminus: L-lactate dehydrogenase B chain (334 aa).

NAD(+) contacts are provided by residues 30-58 and Arg-100; that span reads GQVGMACAVSILLRELTDEIALVDVLEDK. Substrate-binding residues include Arg-107, Asn-139, and Arg-170. Asn-139 lines the NAD(+) pocket. Catalysis depends on His-194, which acts as the Proton acceptor. Thr-249 contacts substrate.

This sequence belongs to the LDH/MDH superfamily. LDH family. Homotetramer.

The protein resides in the cytoplasm. The enzyme catalyses (S)-lactate + NAD(+) = pyruvate + NADH + H(+). It participates in fermentation; pyruvate fermentation to lactate; (S)-lactate from pyruvate: step 1/1. Interconverts simultaneously and stereospecifically pyruvate and lactate with concomitant interconversion of NADH and NAD(+). The polypeptide is L-lactate dehydrogenase B chain (ldhb) (Squalus acanthias (Spiny dogfish)).